Reading from the N-terminus, the 116-residue chain is Cocaine- and amphetamine-regulated transcript protein (116 aa).

The N-terminal stretch at 1–27 (MESSRVRLLPLLGAALLLMLPLLGTRA) is a signal peptide. Position 41 is a phosphotyrosine (tyrosine 41). Residue serine 48 is modified to Phosphoserine. Intrachain disulfides connect cysteine 82/cysteine 100, cysteine 88/cysteine 108, and cysteine 102/cysteine 115.

The protein belongs to the CART family. Hypothalamus. Found in neurons of the ventrolateral part of the arcuate nucleus, in the external zone of the median eminence, and also found in terminals in the periventricular part of the paraventricular nucleus.

The protein localises to the secreted. Satiety factor closely associated with the actions of leptin and neuropeptide Y; this anorectic peptide inhibits both normal and starvation-induced feeding and completely blocks the feeding response induced by neuropeptide Y and regulated by leptin in the hypothalamus. It promotes neuronal development and survival in vitro. This chain is Cocaine- and amphetamine-regulated transcript protein (CARTPT), found in Homo sapiens (Human).